The sequence spans 206 residues: Tumor protein D54 (206 aa).

An N-acetylmethionine modification is found at methionine 1. Polar residues predominate over residues 1-14 (MDSAGQDINLNSPN). Positions 1–24 (MDSAGQDINLNSPNKGLLSDSMTD) are disordered. Serine 3, serine 12, serine 19, and serine 21 each carry phosphoserine. The stretch at 38–82 (VEGLTEAEEEELRAELTKVEEEIVTLRQVLAAKERHCGELKRRLG) forms a coiled coil. 3 positions are modified to phosphoserine: serine 96, serine 149, and serine 161. Threonine 163 is modified (phosphothreonine). At serine 166 the chain carries Phosphoserine. Threonine 173 is subject to Phosphothreonine. Over residues 175–185 (KSKVVGDRENG) the composition is skewed to basic and acidic residues. The segment at 175–206 (KSKVVGDRENGSDNLPSSAGSGDKPLSDPAPF) is disordered. Serine 192 and serine 195 each carry phosphoserine.

The protein belongs to the TPD52 family. As to quaternary structure, forms a homodimer or heterodimer with other members of the family. Interacts with MAL2.

The chain is Tumor protein D54 (TPD52L2) from Homo sapiens (Human).